The following is a 185-amino-acid chain: MVKLPHIYEEIDIPENVTVEINGLKVKVNGPKGSIERDFSHVRNIILRKENSKIIVETFFADRRKKALVGTIASHIENMIKGVLKGYRYKLKIIYSHFPITVEVDDRNRIVRIKNFLGEKSDRIAKIIGEDVKVTVKGEDIIVEGIDIEHVGQTAANIELATKVKDKDRRVFADGIYIYDWGEEE.

It belongs to the universal ribosomal protein uL6 family. In terms of assembly, part of the 50S ribosomal subunit.

In terms of biological role, this protein binds to the 23S rRNA, and is important in its secondary structure. It is located near the subunit interface in the base of the L7/L12 stalk, and near the tRNA binding site of the peptidyltransferase center. This chain is Large ribosomal subunit protein uL6, found in Staphylothermus marinus (strain ATCC 43588 / DSM 3639 / JCM 9404 / F1).